The primary structure comprises 608 residues: UvrABC system protein C (608 aa).

Positions 13–91 (HDAGVYRMYD…IKTYQPRYNV (79 aa)) constitute a GIY-YIG domain. The UVR domain maps to 201 to 236 (QQVLEHLIHKMEQASLALDFEEAARIRDQIQAVRAV).

The protein belongs to the UvrC family. In terms of assembly, interacts with UvrB in an incision complex.

The protein localises to the cytoplasm. Functionally, the UvrABC repair system catalyzes the recognition and processing of DNA lesions. UvrC both incises the 5' and 3' sides of the lesion. The N-terminal half is responsible for the 3' incision and the C-terminal half is responsible for the 5' incision. The protein is UvrABC system protein C of Pasteurella multocida (strain Pm70).